Consider the following 866-residue polypeptide: Probable LRR receptor-like serine/threonine-protein kinase At5g16900 (866 aa).

Positions 1–20 (MEDRHRYLFFIFAIIHYVQA) are cleaved as a signal peptide. The Extracellular segment spans residues 21–515 (QQGFISLDCG…SSSGNKETTV (495 aa)). Asn137, Asn176, Asn230, Asn251, Asn331, Asn404, Asn409, and Asn436 each carry an N-linked (GlcNAc...) asparagine glycan. LRR repeat units lie at residues 415–438 (RIIS…QNLT), 439–461 (QLQK…LANM), and 463–485 (SLLF…LLDR). N-linked (GlcNAc...) asparagine glycosylation is found at Asn468 and Asn505. A helical transmembrane segment spans residues 516 to 536 (IAPVAAAIAIFIAVLVLIIVF). The Cytoplasmic segment spans residues 537 to 866 (IKKRPSSIRA…LNQVIDSKSS (330 aa)). Phosphothreonine is present on Thr564. Residues 573–846 (NNFERVIGEG…HVVQELKQCI (274 aa)) enclose the Protein kinase domain. Residues 579-587 (IGEGGFGVV) and Lys601 each bind ATP. Tyr646 is modified (phosphotyrosine). The active-site Proton acceptor is Asp698. Ser732 is subject to Phosphoserine. Phosphothreonine is present on residues Thr733 and Thr738. Phosphotyrosine is present on Tyr746.

It belongs to the protein kinase superfamily. Ser/Thr protein kinase family.

The protein resides in the membrane. It catalyses the reaction L-seryl-[protein] + ATP = O-phospho-L-seryl-[protein] + ADP + H(+). The catalysed reaction is L-threonyl-[protein] + ATP = O-phospho-L-threonyl-[protein] + ADP + H(+). This Arabidopsis thaliana (Mouse-ear cress) protein is Probable LRR receptor-like serine/threonine-protein kinase At5g16900.